The following is a 660-amino-acid chain: U-box domain-containing protein 13 (660 aa).

The disordered stretch occupies residues 227 to 252 (DDNGEEQKVGVNSRSNGQTSTAASQK). Polar residues predominate over residues 236-250 (GVNSRSNGQTSTAAS). The U-box domain maps to 255–329 (VIPDDFRCPI…AQWCEANDIE (75 aa)). 5 ARM repeats span residues 384–423 (ADNR…NLSI), 425–464 (ENNK…SLSV), 466–505 (DENK…NLCI), 507–546 (QGNK…ILSS), and 548–587 (PEGK…HLCS). The tract at residues 631–660 (AEQQKETAVSQPEEEAEPTHPESTTEAADT) is disordered. Polar residues predominate over residues 651-660 (PESTTEAADT).

As to quaternary structure, binds to SD11, SD16, SD17, SD18, SD113, SD129 and SD25. In terms of processing, phosphorylated by SD1-6 and SD1-7.

The protein localises to the nucleus. It is found in the cytoplasm. The enzyme catalyses S-ubiquitinyl-[E2 ubiquitin-conjugating enzyme]-L-cysteine + [acceptor protein]-L-lysine = [E2 ubiquitin-conjugating enzyme]-L-cysteine + N(6)-ubiquitinyl-[acceptor protein]-L-lysine.. The protein operates within protein modification; protein ubiquitination. Its function is as follows. Functions as an E3 ubiquitin ligase. This Arabidopsis thaliana (Mouse-ear cress) protein is U-box domain-containing protein 13 (PUB13).